We begin with the raw amino-acid sequence, 1733 residues long: Protein NETWORKED 1D (1733 aa).

An NAB domain is found at 12-92; sequence YSWWWDSHIS…ERYDHATGVI (81 aa). 4 coiled-coil regions span residues 195–816, 897–931, 960–1043, and 1196–1386; these read KEIN…RESS, LIAE…QIDS, DENS…QKLI, and ARSA…NDLM. A disordered region spans residues 1456–1476; sequence LKTSSARRSRRRNGSLRKQNH. The span at 1460-1470 shows a compositional bias: basic residues; it reads SARRSRRRNGS. 2 coiled-coil regions span residues 1553–1627 and 1653–1686; these read ANKR…KVQN and SEQA…DRED. Positions 1628–1656 are disordered; that stretch reads GFERSDGSKSSMDLDENESSRRRRISEQA.

The protein belongs to the NET family.

Its function is as follows. Plant-specific actin binding protein. May be part of a membrane-cytoskeletal adapter complex. The polypeptide is Protein NETWORKED 1D (Arabidopsis thaliana (Mouse-ear cress)).